We begin with the raw amino-acid sequence, 417 residues long: Serine--tRNA ligase (417 aa).

226 to 228 (TSE) provides a ligand contact to L-serine. ATP is bound by residues 257–259 (RRE) and Val273. Residue Glu280 coordinates L-serine. 344–347 (EVTS) is an ATP binding site. Thr379 is a binding site for L-serine.

It belongs to the class-II aminoacyl-tRNA synthetase family. Type-1 seryl-tRNA synthetase subfamily. As to quaternary structure, homodimer. The tRNA molecule binds across the dimer.

The protein localises to the cytoplasm. It carries out the reaction tRNA(Ser) + L-serine + ATP = L-seryl-tRNA(Ser) + AMP + diphosphate + H(+). The catalysed reaction is tRNA(Sec) + L-serine + ATP = L-seryl-tRNA(Sec) + AMP + diphosphate + H(+). The protein operates within aminoacyl-tRNA biosynthesis; selenocysteinyl-tRNA(Sec) biosynthesis; L-seryl-tRNA(Sec) from L-serine and tRNA(Sec): step 1/1. Its function is as follows. Catalyzes the attachment of serine to tRNA(Ser). Is also able to aminoacylate tRNA(Sec) with serine, to form the misacylated tRNA L-seryl-tRNA(Sec), which will be further converted into selenocysteinyl-tRNA(Sec). The polypeptide is Serine--tRNA ligase (Tropheryma whipplei (strain TW08/27) (Whipple's bacillus)).